The chain runs to 242 residues: Endoglucanase-5 (242 aa).

Positions 1–17 (MKATLVLGSLIVGAVSA) are cleaved as a signal peptide. A catalytic region spans residues 18–182 (YKATTTRYYD…ETDPTPVLGN (165 aa)). The Nucleophile role is filled by aspartate 27. Residue aspartate 134 is the Proton donor of the active site. Residues 177–206 (TPVLGNDTGSTPPGSSPPATSSSPPSGGGQ) form a disordered region. Asparagine 182 carries an N-linked (GlcNAc...) asparagine glycan. The segment covering 184 to 201 (TGSTPPGSSPPATSSSPP) has biased composition (low complexity). Positions 205-241 (GQQTLYGQCGGAGWTGPTTCQAPGTCKVQNQWYSQCL) constitute a CBM1 domain. 2 disulfides stabilise this stretch: cysteine 213–cysteine 230 and cysteine 224–cysteine 240.

It belongs to the glycosyl hydrolase 45 (cellulase K) family.

The catalysed reaction is Endohydrolysis of (1-&gt;4)-beta-D-glucosidic linkages in cellulose, lichenin and cereal beta-D-glucans.. In Hypocrea jecorina (Trichoderma reesei), this protein is Endoglucanase-5 (egl5).